A 228-amino-acid polypeptide reads, in one-letter code: L-ribulose-5-phosphate 4-epimerase UlaF (228 aa).

Substrate contacts are provided by residues 26–27 (GN), 43–44 (SG), and 72–73 (SS). The Zn(2+) site is built by aspartate 74, histidine 93, and histidine 95. Catalysis depends on aspartate 118, which acts as the Proton donor/acceptor. Residue histidine 167 participates in Zn(2+) binding. The Proton donor/acceptor role is filled by tyrosine 225.

Belongs to the aldolase class II family. AraD/FucA subfamily. Requires Zn(2+) as cofactor.

It catalyses the reaction L-ribulose 5-phosphate = D-xylulose 5-phosphate. It participates in cofactor degradation; L-ascorbate degradation; D-xylulose 5-phosphate from L-ascorbate: step 4/4. Catalyzes the isomerization of L-ribulose 5-phosphate to D-xylulose 5-phosphate. Is involved in the anaerobic L-ascorbate utilization. This chain is L-ribulose-5-phosphate 4-epimerase UlaF, found in Escherichia coli O81 (strain ED1a).